The primary structure comprises 1645 residues: Thrombospondin type-1 domain-containing protein 7A (1645 aa).

Positions 1–38 (MGLRAGRLASPSRGVLQLLRLPLLLLLLLSSGARGAAA) are cleaved as a signal peptide. Over 39–1595 (QGDTEVPTLY…FGPDGRLKTW (1557 aa)) the chain is Extracellular. 3 consecutive TSP type-1 domains span residues 46 to 105 (TLYL…KVCD), 109 to 181 (ELYD…IPCQ), and 183 to 236 (DCIV…NPCE). A glycan (N-linked (GlcNAc...) asparagine) is linked at N223. The disordered stretch occupies residues 255-300 (PHTRQARQARRRGKNKEREKERGKAVKDPEARELIKKKRNRNRQNR). The stretch at 256 to 304 (HTRQARQARRRGKNKEREKERGKAVKDPEARELIKKKRNRNRQNRQENR) forms a coiled coil. Residues 258 to 269 (RQARQARRRGKN) are compositionally biased toward basic residues. Residues 270 to 288 (KEREKERGKAVKDPEAREL) show a composition bias toward basic and acidic residues. Over residues 289–298 (IKKKRNRNRQ) the composition is skewed to basic residues. N-linked (GlcNAc...) asparagine glycosylation is present at N321. 16 TSP type-1 domains span residues 349 to 405 (ECQV…VSQG), 412 to 499 (ATYG…VPCP), 501 to 563 (ECEV…PSCY), 623 to 684 (DCVL…HPCT), 685 to 758 (VYHW…LPCR), 760 to 820 (DCVV…PTCH), 821 to 893 (SYRW…IPCQ), 895 to 948 (DCQF…CPCD), 949 to 1022 (KYNA…IPCP), 1024 to 1084 (DCKL…SDCN), 1085 to 1152 (QYIW…LPCP), 1154 to 1208 (DCVI…KNCY), 1209 to 1272 (HYDY…VECP), 1274 to 1329 (NCQL…KPCY), 1330 to 1400 (RWQY…QPCP), and 1402 to 1463 (DCYL…GQCY). Disulfide bonds link C424/C494, C444/C498, and C455/C483. Residue N439 is glycosylated (N-linked (GlcNAc...) asparagine). The N-linked (GlcNAc...) asparagine glycan is linked to N489. Disulfide bonds link C624/C666 and C635/C639. The N-linked (GlcNAc...) asparagine glycan is linked to N668. Intrachain disulfides connect C678–C683, C696–C753, C717–C757, C728–C741, C761–C803, C772–C776, and C813–C819. N706 carries N-linked (GlcNAc...) asparagine glycosylation. Residue N957 is glycosylated (N-linked (GlcNAc...) asparagine). Intrachain disulfides connect C961–C1017, C983–C1021, C994–C1007, C1025–C1062, C1036–C1040, and C1079–C1083. N1032 carries an N-linked (GlcNAc...) asparagine glycan. C1201 and C1207 are disulfide-bonded. A glycan (N-linked (GlcNAc...) asparagine) is linked at N1213. 12 disulfide bridges follow: C1220/C1267, C1228/C1271, C1239/C1252, C1275/C1313, C1286/C1290, C1323/C1328, C1339/C1395, C1346/C1399, C1357/C1376, C1403/C1447, C1414/C1418, and C1457/C1462. A glycan (N-linked (GlcNAc...) asparagine) is linked at N1264. N1354 carries an N-linked (GlcNAc...) asparagine glycan. Residues N1488 and N1535 are each glycosylated (N-linked (GlcNAc...) asparagine). Residues 1596 to 1616 (VYGVAAGAFVLLVFIVSMIYL) traverse the membrane as a helical segment. Over 1617–1645 (ACKKPKKPQRRQNNRLKPLTLAYDGDADM) the chain is Cytoplasmic.

Post-translationally, proteolytic cleavage in the extracellular region generates a 210 kDa soluble form. In terms of processing, extensively N-glycosylated. Detected on kidney podocytes along the glomerular capillary wall (at protein level).

Its subcellular location is the cell membrane. The protein localises to the cell projection. The protein resides in the secreted. Plays a role in actin cytoskeleton rearrangement. In terms of biological role, the soluble form promotes endothelial cell migration and filopodia formation during sprouting angiogenesis via a FAK-dependent mechanism. The protein is Thrombospondin type-1 domain-containing protein 7A (Thsd7a) of Mus musculus (Mouse).